The primary structure comprises 498 residues: Sulfate adenylyltransferase subunit 1 (498 aa).

In terms of domain architecture, tr-type G spans 30 to 246 (TRPLRLITCG…LELATTRSAQ (217 aa)). The segment at 39–46 (GSVDDGKS) is G1. Position 39 to 46 (39 to 46 (GSVDDGKS)) interacts with GTP. A G2 region spans residues 97–101 (GITID). Residues 118–121 (DTPG) are G3. Residues 118–122 (DTPGH) and 173–176 (NKID) contribute to the GTP site. The tract at residues 173–176 (NKID) is G4. The tract at residues 210–212 (SAL) is G5.

It belongs to the TRAFAC class translation factor GTPase superfamily. Classic translation factor GTPase family. CysN/NodQ subfamily. In terms of assembly, heterodimer composed of CysD, the smaller subunit, and CysN.

It catalyses the reaction sulfate + ATP + H(+) = adenosine 5'-phosphosulfate + diphosphate. It functions in the pathway sulfur metabolism; hydrogen sulfide biosynthesis; sulfite from sulfate: step 1/3. In terms of biological role, with CysD forms the ATP sulfurylase (ATPS) that catalyzes the adenylation of sulfate producing adenosine 5'-phosphosulfate (APS) and diphosphate, the first enzymatic step in sulfur assimilation pathway. APS synthesis involves the formation of a high-energy phosphoric-sulfuric acid anhydride bond driven by GTP hydrolysis by CysN coupled to ATP hydrolysis by CysD. This chain is Sulfate adenylyltransferase subunit 1, found in Rhizobium meliloti (strain 1021) (Ensifer meliloti).